A 132-amino-acid polypeptide reads, in one-letter code: Small ribosomal subunit protein uS8 (132 aa).

The protein belongs to the universal ribosomal protein uS8 family. In terms of assembly, part of the 30S ribosomal subunit. Contacts proteins S5 and S12.

One of the primary rRNA binding proteins, it binds directly to 16S rRNA central domain where it helps coordinate assembly of the platform of the 30S subunit. This Clostridium botulinum (strain Alaska E43 / Type E3) protein is Small ribosomal subunit protein uS8.